We begin with the raw amino-acid sequence, 294 residues long: Formamidopyrimidine-DNA glycosylase (294 aa).

Catalysis depends on proline 2, which acts as the Schiff-base intermediate with DNA. Residue glutamate 3 is the Proton donor of the active site. Lysine 58 functions as the Proton donor; for beta-elimination activity in the catalytic mechanism. Residues histidine 105, arginine 124, and lysine 167 each contribute to the DNA site. The FPG-type zinc-finger motif lies at 258–294; it reads QVYDREGEPCRTRGCKGTVKRFTQNGRSTFWCPSCQK. The active-site Proton donor; for delta-elimination activity is the arginine 284.

Belongs to the FPG family. As to quaternary structure, monomer. Requires Zn(2+) as cofactor.

It catalyses the reaction Hydrolysis of DNA containing ring-opened 7-methylguanine residues, releasing 2,6-diamino-4-hydroxy-5-(N-methyl)formamidopyrimidine.. The enzyme catalyses 2'-deoxyribonucleotide-(2'-deoxyribose 5'-phosphate)-2'-deoxyribonucleotide-DNA = a 3'-end 2'-deoxyribonucleotide-(2,3-dehydro-2,3-deoxyribose 5'-phosphate)-DNA + a 5'-end 5'-phospho-2'-deoxyribonucleoside-DNA + H(+). Functionally, involved in base excision repair of DNA damaged by oxidation or by mutagenic agents. Acts as a DNA glycosylase that recognizes and removes damaged bases. Has a preference for oxidized purines, such as 7,8-dihydro-8-oxoguanine (8-oxoG). Has AP (apurinic/apyrimidinic) lyase activity and introduces nicks in the DNA strand. Cleaves the DNA backbone by beta-delta elimination to generate a single-strand break at the site of the removed base with both 3'- and 5'-phosphates. The chain is Formamidopyrimidine-DNA glycosylase from Afipia carboxidovorans (strain ATCC 49405 / DSM 1227 / KCTC 32145 / OM5) (Oligotropha carboxidovorans).